Here is a 257-residue protein sequence, read N- to C-terminus: tRNA pseudouridine synthase A (257 aa).

The Nucleophile role is filled by D53. Substrate is bound at residue Y111.

Belongs to the tRNA pseudouridine synthase TruA family. Homodimer.

The catalysed reaction is uridine(38/39/40) in tRNA = pseudouridine(38/39/40) in tRNA. Its function is as follows. Formation of pseudouridine at positions 38, 39 and 40 in the anticodon stem and loop of transfer RNAs. This chain is tRNA pseudouridine synthase A, found in Xanthomonas axonopodis pv. citri (strain 306).